A 294-amino-acid chain; its full sequence is uncharacterized protein (294 aa).

3 helical membrane-spanning segments follow: residues 21–41 (AIVATNFSWLFITFFVMTFTF), 51–71 (PIIWTLYFFLCLIAFLLLWAA), and 77–97 (ILFSFAFGDVYSFFMAGVFLF). Residues 156 to 176 (HPVPFPAEPGSPDPVSPPPPI) are disordered. Residues 184-215 (ERAESLHAGNIELAEDLQRIQEMERNLENERS) adopt a coiled-coil conformation. The span at 265-277 (QQENESRLEERRF) shows a compositional bias: basic and acidic residues. Residues 265–294 (QQENESRLEERRFQSHSTNSLFEADSSRDN) are disordered.

The protein localises to the mitochondrion membrane. This is an uncharacterized protein from Arabidopsis thaliana (Mouse-ear cress).